The primary structure comprises 302 residues: Sulfate adenylyltransferase subunit 2 (302 aa).

The protein belongs to the PAPS reductase family. CysD subfamily. In terms of assembly, heterodimer composed of CysD, the smaller subunit, and CysN.

The catalysed reaction is sulfate + ATP + H(+) = adenosine 5'-phosphosulfate + diphosphate. Its pathway is sulfur metabolism; hydrogen sulfide biosynthesis; sulfite from sulfate: step 1/3. With CysN forms the ATP sulfurylase (ATPS) that catalyzes the adenylation of sulfate producing adenosine 5'-phosphosulfate (APS) and diphosphate, the first enzymatic step in sulfur assimilation pathway. APS synthesis involves the formation of a high-energy phosphoric-sulfuric acid anhydride bond driven by GTP hydrolysis by CysN coupled to ATP hydrolysis by CysD. The polypeptide is Sulfate adenylyltransferase subunit 2 (Aeromonas hydrophila subsp. hydrophila (strain ATCC 7966 / DSM 30187 / BCRC 13018 / CCUG 14551 / JCM 1027 / KCTC 2358 / NCIMB 9240 / NCTC 8049)).